A 496-amino-acid chain; its full sequence is Probable cytosol aminopeptidase (496 aa).

Mn(2+) contacts are provided by Lys-258 and Asp-263. Lys-270 is a catalytic residue. Mn(2+)-binding residues include Asp-281, Asp-340, and Glu-342. Residue Arg-344 is part of the active site.

This sequence belongs to the peptidase M17 family. Mn(2+) is required as a cofactor.

The protein resides in the cytoplasm. The enzyme catalyses Release of an N-terminal amino acid, Xaa-|-Yaa-, in which Xaa is preferably Leu, but may be other amino acids including Pro although not Arg or Lys, and Yaa may be Pro. Amino acid amides and methyl esters are also readily hydrolyzed, but rates on arylamides are exceedingly low.. It carries out the reaction Release of an N-terminal amino acid, preferentially leucine, but not glutamic or aspartic acids.. In terms of biological role, presumably involved in the processing and regular turnover of intracellular proteins. Catalyzes the removal of unsubstituted N-terminal amino acids from various peptides. The sequence is that of Probable cytosol aminopeptidase from Helicobacter pylori (strain P12).